The primary structure comprises 157 residues: MAKKPDTSSRIADNKKAAYNYFFEERYEAGLVLHGWEVKALREGKVQLTDGYVIIKDGELFLIGCQINPLKTASTHVSPDAARIKKLLMHKDEIRRLIGKVEQKGYTLVPLNLHWKDGRAKCEIALAKGKAEHDKRDTIKEREGKREVERVMKSRHR.

The interval 130–157 is disordered; sequence KAEHDKRDTIKEREGKREVERVMKSRHR.

It belongs to the SmpB family.

The protein resides in the cytoplasm. Required for rescue of stalled ribosomes mediated by trans-translation. Binds to transfer-messenger RNA (tmRNA), required for stable association of tmRNA with ribosomes. tmRNA and SmpB together mimic tRNA shape, replacing the anticodon stem-loop with SmpB. tmRNA is encoded by the ssrA gene; the 2 termini fold to resemble tRNA(Ala) and it encodes a 'tag peptide', a short internal open reading frame. During trans-translation Ala-aminoacylated tmRNA acts like a tRNA, entering the A-site of stalled ribosomes, displacing the stalled mRNA. The ribosome then switches to translate the ORF on the tmRNA; the nascent peptide is terminated with the 'tag peptide' encoded by the tmRNA and targeted for degradation. The ribosome is freed to recommence translation, which seems to be the essential function of trans-translation. The polypeptide is SsrA-binding protein (Acidovorax sp. (strain JS42)).